The primary structure comprises 1153 residues: Cytosolic carboxypeptidase 1 (1153 aa).

The tract at residues 357–400 is disordered; the sequence is NQPPGVDDVVDESDENEATEVDTENDTENEEDDTGHKTQNDDIE. Acidic residues predominate over residues 364-389; that stretch reads DVVDESDENEATEVDTENDTENEEDD. A Peptidase M14 domain is found at 774 to 1063; it reads YPYTYSMLKM…QFCLALLRLR (290 aa). The Zn(2+) site is built by His-845, Glu-848, and His-942. Glu-1027 serves as the catalytic Proton donor/acceptor. Positions 1108-1128 are enriched in acidic residues; the sequence is AFLEEVDYSAESNDENDPELE. A disordered region spans residues 1108-1153; sequence AFLEEVDYSAESNDENDPELEPDLRDNHALPDPSSDSELSHQDSLT. A compositionally biased stretch (polar residues) spans 1141 to 1153; that stretch reads SSDSELSHQDSLT.

It belongs to the peptidase M14 family. Zn(2+) is required as a cofactor.

The protein resides in the cytoplasm. Its subcellular location is the cytosol. It localises to the nucleus. It is found in the mitochondrion. It carries out the reaction (L-glutamyl)(n+1)-gamma-L-glutamyl-L-glutamyl-[protein] + H2O = (L-glutamyl)(n)-gamma-L-glutamyl-L-glutamyl-[protein] + L-glutamate. It catalyses the reaction C-terminal L-alpha-aminoacyl-L-glutamyl-L-glutamyl-[tubulin] + H2O = C-terminal L-alpha-aminoacyl-L-glutamyl-[tubulin] + L-glutamate. Its function is as follows. Metallocarboxypeptidase that mediates protein deglutamylation of tubulin and non-tubulin target proteins. Catalyzes the removal of polyglutamate side chains present on the gamma-carboxyl group of glutamate residues within the C-terminal tail of alpha- and beta-tubulin. Specifically cleaves tubulin long-side-chains, while it is not able to remove the branching point glutamate. Also catalyzes the removal of polyglutamate residues from the carboxy-terminus of alpha-tubulin as well as non-tubulin proteins. In Danio rerio (Zebrafish), this protein is Cytosolic carboxypeptidase 1 (agtpbp1).